The chain runs to 325 residues: NADH-quinone oxidoreductase subunit H (325 aa).

8 helical membrane-spanning segments follow: residues 8-28, 81-101, 114-134, 159-179, 186-206, 237-257, 265-285, and 304-324; these read VIDILLTVVKAVVILLVVVTC, GIFTLAPVIAFTSLLITFAIV, IGVLFFLMMAGLAVYAVLFAG, FLGLSLMGVVAQAGSFNLGAI, LWNVVPQFFGFVTFALAGVAV, FFVGEYVGIVTISALMVTLFF, LPPFIWFSIKTAFFMMMFILI, and ICLPLTLLNLLATAAVILYNA.

The protein belongs to the complex I subunit 1 family. In terms of assembly, NDH-1 is composed of 13 different subunits. Subunits NuoA, H, J, K, L, M, N constitute the membrane sector of the complex.

The protein localises to the cell inner membrane. The catalysed reaction is a quinone + NADH + 5 H(+)(in) = a quinol + NAD(+) + 4 H(+)(out). Functionally, NDH-1 shuttles electrons from NADH, via FMN and iron-sulfur (Fe-S) centers, to quinones in the respiratory chain. The immediate electron acceptor for the enzyme in this species is believed to be ubiquinone. Couples the redox reaction to proton translocation (for every two electrons transferred, four hydrogen ions are translocated across the cytoplasmic membrane), and thus conserves the redox energy in a proton gradient. This subunit may bind ubiquinone. The chain is NADH-quinone oxidoreductase subunit H from Sodalis glossinidius (strain morsitans).